A 193-amino-acid chain; its full sequence is MLSHKTQHKSIYTREKSYKCKKCGKTFNWSSILTNNKKIHTEQKPYKCEECGKAFKQHSTLTTHKIICAEEKLYRCEECGKAFCQPSTLTRYKRMHRRKKLYKCEECGKAFTQFSTLTKHKRIHTRGKHYKCEESGKAFIWSSGLTEHRRVHTRQKPYKCEECGKALIQFSTLTRHKRIHTGEKPNKSMWQTF.

Residues 18 to 40 (YKCKKCGKTFNWSSILTNNKKIH) form a C2H2-type 1; degenerate zinc finger. The C2H2-type 2; atypical zinc-finger motif lies at 46–68 (YKCEECGKAFKQHSTLTTHKIIC). The segment at 74 to 96 (YRCEECGKAFCQPSTLTRYKRMH) adopts a C2H2-type 3; degenerate zinc-finger fold. A C2H2-type 4 zinc finger spans residues 102 to 124 (YKCEECGKAFTQFSTLTKHKRIH). The segment at 130–152 (YKCEESGKAFIWSSGLTEHRRVH) adopts a C2H2-type 5; degenerate zinc-finger fold. The segment at 158-180 (YKCEECGKALIQFSTLTRHKRIH) adopts a C2H2-type 6 zinc-finger fold.

The sequence is that of Putative zinc finger protein 726P1 (ZNF726P1) from Homo sapiens (Human).